The following is a 228-amino-acid chain: Cytidylate kinase (228 aa).

17 to 25 (GPTASGKGT) is a binding site for ATP.

This sequence belongs to the cytidylate kinase family. Type 1 subfamily.

Its subcellular location is the cytoplasm. The catalysed reaction is CMP + ATP = CDP + ADP. It catalyses the reaction dCMP + ATP = dCDP + ADP. This Burkholderia multivorans (strain ATCC 17616 / 249) protein is Cytidylate kinase.